The sequence spans 452 residues: Cytoplasmic tRNA 2-thiolation protein 2 (452 aa).

This sequence belongs to the CTU2/NCS2 family.

Its subcellular location is the cytoplasm. Its pathway is tRNA modification; 5-methoxycarbonylmethyl-2-thiouridine-tRNA biosynthesis. In terms of biological role, plays a central role in 2-thiolation of mcm(5)S(2)U at tRNA wobble positions of tRNA(Lys), tRNA(Glu) and tRNA(Gln). May act by forming a heterodimer with NCS6 that ligates sulfur from thiocarboxylated URM1 onto the uridine of tRNAs at wobble position. Prior mcm(5) tRNA modification by the elongator complex is required for 2-thiolation. May also be involved in protein urmylation. The sequence is that of Cytoplasmic tRNA 2-thiolation protein 2 from Candida albicans (strain SC5314 / ATCC MYA-2876) (Yeast).